Here is a 376-residue protein sequence, read N- to C-terminus: 3-dehydroquinate synthase (376 aa).

Residues 115 to 119, 139 to 140, Lys-152, and Lys-161 each bind NAD(+); these read GVIGD and TS. Zn(2+)-binding residues include Glu-194, His-256, and His-275.

This sequence belongs to the sugar phosphate cyclases superfamily. Dehydroquinate synthase family. Co(2+) is required as a cofactor. The cofactor is Zn(2+). It depends on NAD(+) as a cofactor.

It is found in the cytoplasm. The enzyme catalyses 7-phospho-2-dehydro-3-deoxy-D-arabino-heptonate = 3-dehydroquinate + phosphate. The protein operates within metabolic intermediate biosynthesis; chorismate biosynthesis; chorismate from D-erythrose 4-phosphate and phosphoenolpyruvate: step 2/7. In terms of biological role, catalyzes the conversion of 3-deoxy-D-arabino-heptulosonate 7-phosphate (DAHP) to dehydroquinate (DHQ). This Rhizobium johnstonii (strain DSM 114642 / LMG 32736 / 3841) (Rhizobium leguminosarum bv. viciae) protein is 3-dehydroquinate synthase.